A 529-amino-acid polypeptide reads, in one-letter code: Bifunctional purine biosynthesis protein PurH (529 aa).

One can recognise an MGS-like domain in the interval 1–148 (MQQHRPVRRA…KNHKDVAIVV (148 aa)).

The protein belongs to the PurH family.

The enzyme catalyses (6R)-10-formyltetrahydrofolate + 5-amino-1-(5-phospho-beta-D-ribosyl)imidazole-4-carboxamide = 5-formamido-1-(5-phospho-D-ribosyl)imidazole-4-carboxamide + (6S)-5,6,7,8-tetrahydrofolate. It carries out the reaction IMP + H2O = 5-formamido-1-(5-phospho-D-ribosyl)imidazole-4-carboxamide. Its pathway is purine metabolism; IMP biosynthesis via de novo pathway; 5-formamido-1-(5-phospho-D-ribosyl)imidazole-4-carboxamide from 5-amino-1-(5-phospho-D-ribosyl)imidazole-4-carboxamide (10-formyl THF route): step 1/1. It participates in purine metabolism; IMP biosynthesis via de novo pathway; IMP from 5-formamido-1-(5-phospho-D-ribosyl)imidazole-4-carboxamide: step 1/1. The protein is Bifunctional purine biosynthesis protein PurH of Erwinia tasmaniensis (strain DSM 17950 / CFBP 7177 / CIP 109463 / NCPPB 4357 / Et1/99).